We begin with the raw amino-acid sequence, 185 residues long: Large ribosomal subunit protein uL6m (185 aa).

It belongs to the universal ribosomal protein uL6 family.

It localises to the mitochondrion. This chain is Large ribosomal subunit protein uL6m (RPL6), found in Reclinomonas americana.